The following is a 499-amino-acid chain: Lysine--tRNA ligase (499 aa).

The Mg(2+) site is built by E408 and E415.

It belongs to the class-II aminoacyl-tRNA synthetase family. In terms of assembly, homodimer. The cofactor is Mg(2+).

The protein localises to the cytoplasm. The enzyme catalyses tRNA(Lys) + L-lysine + ATP = L-lysyl-tRNA(Lys) + AMP + diphosphate. The polypeptide is Lysine--tRNA ligase (Agrobacterium fabrum (strain C58 / ATCC 33970) (Agrobacterium tumefaciens (strain C58))).